A 490-amino-acid chain; its full sequence is Protein nucleotidyltransferase YdiU (490 aa).

Residues G92, G94, R95, K114, D126, G127, R177, and R184 each contribute to the ATP site. The active-site Proton acceptor is D256. The Mg(2+) site is built by N257 and D266. D266 is a binding site for ATP.

Belongs to the SELO family. It depends on Mg(2+) as a cofactor. Requires Mn(2+) as cofactor.

It carries out the reaction L-seryl-[protein] + ATP = 3-O-(5'-adenylyl)-L-seryl-[protein] + diphosphate. It catalyses the reaction L-threonyl-[protein] + ATP = 3-O-(5'-adenylyl)-L-threonyl-[protein] + diphosphate. The catalysed reaction is L-tyrosyl-[protein] + ATP = O-(5'-adenylyl)-L-tyrosyl-[protein] + diphosphate. The enzyme catalyses L-histidyl-[protein] + UTP = N(tele)-(5'-uridylyl)-L-histidyl-[protein] + diphosphate. It carries out the reaction L-seryl-[protein] + UTP = O-(5'-uridylyl)-L-seryl-[protein] + diphosphate. It catalyses the reaction L-tyrosyl-[protein] + UTP = O-(5'-uridylyl)-L-tyrosyl-[protein] + diphosphate. Functionally, nucleotidyltransferase involved in the post-translational modification of proteins. It can catalyze the addition of adenosine monophosphate (AMP) or uridine monophosphate (UMP) to a protein, resulting in modifications known as AMPylation and UMPylation. The chain is Protein nucleotidyltransferase YdiU from Bordetella avium (strain 197N).